Reading from the N-terminus, the 938-residue chain is Glutamate receptor ionotropic, NMDA 1 (938 aa).

A signal peptide spans 1–18 (MSTMHLLTFALLFSCSFA). The Extracellular segment spans residues 19-559 (RAACDPKIVN…TLDSFMQPFQ (541 aa)). Asparagine 61, asparagine 203, asparagine 239, asparagine 276, asparagine 300, asparagine 350, asparagine 368, asparagine 440, asparagine 471, and asparagine 491 each carry an N-linked (GlcNAc...) asparagine glycan. Cysteine 79 and cysteine 308 are oxidised to a cystine. Intrachain disulfides connect cysteine 420-cysteine 454 and cysteine 436-cysteine 455. Residues proline 516, threonine 518, and arginine 523 each contribute to the glycine site. Residues 560–580 (STLWLLVGLSVHVVAVMLYLL) traverse the membrane as a helical segment. Residues 581-602 (DRFSPFGRFKVNSEEEEEDALT) are Cytoplasmic-facing. The segment at residues 603 to 624 (LSSAMWFSWGVLLNSGIGEGAP) is an intramembrane region (discontinuously helical). The pore-forming stretch occupies residues 603-624 (LSSAMWFSWGVLLNSGIGEGAP). Over 625–630 (RSFSAR) the chain is Cytoplasmic. A helical transmembrane segment spans residues 631-647 (ILGMVWAGFAMIIVASY). Residues 648 to 812 (TANLAAFLVL…NAPATLTFEN (165 aa)) lie on the Extracellular side of the membrane. An N-linked (GlcNAc...) asparagine glycan is attached at asparagine 674. 2 residues coordinate glycine: serine 688 and aspartate 732. Cysteines 744 and 798 form a disulfide. A glycan (N-linked (GlcNAc...) asparagine) is linked at asparagine 771. The chain crosses the membrane as a helical span at residues 813-833 (MAGVFMLVAGGIVAGIFLIFI). The Cytoplasmic segment spans residues 834-938 (EIAYKRHKDA…LQLCSRHRES (105 aa)). Residue lysine 877 is modified to Phosphoserine. 4 positions are modified to phosphoserine; by PKC: serine 889, serine 890, serine 896, and serine 897. Residues 889–938 (SSFKRRRSSKDTSTGGGRGALQNQKDTVLPRRAIEREEGQLQLCSRHRES) are disordered. Lysine 898 carries the phosphoserine modification. The segment covering 916–927 (VLPRRAIEREEG) has biased composition (basic and acidic residues).

It belongs to the glutamate-gated ion channel (TC 1.A.10.1) family. NR1/GRIN1 subfamily. As to quaternary structure, heterotetramer; the NMDAR subunits are modular and harbor tiered domains that function in concert to regulate opening and closing of the cation-selective ion channel pore. Forms heterotetrameric channels composed of two GluN1/zeta subunits (GRIN1), and two identical GluN2/epsilon subunits (GRIN2A, GRIN2B, GRIN2C or GRIN2D) or GluN3 subunits (GRIN3A or GRIN3B) (in vitro). Can also form heterotetrameric channels that contain at least two GluN1 subunits and at least two different GluN2 subunits (or a combination of one GluN2 and one GluN3 subunits) (in vitro). In vivo, the subunit composition may vary in function of the expression levels of the different subunits. Found in a complex with GRIN2A or GRIN2B, GRIN3A and PPP2CB. Found in a complex with GRIN2A or GRIN2B and GRIN3B;. Interacts with SNX27 (via PDZ domain); the interaction is required for recycling to the plasma membrane when endocytosed and prevent degradation in lysosomes. Interacts with DLG4 and MPDZ. Interacts with LRFN1 and LRFN2. Interacts with MYZAP. Found in a complex with DLG4 and PRR7. Found in a complex with GRIN2B and PRR7. Interacts with PRR7; the interaction is reduced following NMDA receptor activity. Post-translationally, NMDA is probably regulated by C-terminal phosphorylation of an isoform of NR1 by PKC. Dephosphorylated on Ser-897 probably by protein phosphatase 2A (PPP2CB). Its phosphorylated state is influenced by the formation of the NMDAR-PPP2CB complex and the NMDAR channel activity. In terms of tissue distribution, detected throughout the brain, in brain cortex, cerebellum, thalamus and olfactory bulb.

Its subcellular location is the cell membrane. The protein localises to the postsynaptic cell membrane. The protein resides in the synaptic cell membrane. It is found in the postsynaptic density membrane. It catalyses the reaction Ca(2+)(in) = Ca(2+)(out). The catalysed reaction is Na(+)(in) = Na(+)(out). It carries out the reaction K(+)(in) = K(+)(out). With respect to regulation, NMDA glutamate receptor activity is potentiated by Zn2(+) in a dose-dependent fashion. The potentiating effect of Zn2(+) is at submicromolar concentrations and its inhibitory action is at high micromolar to millimolar concentrations. Excitatory glycine receptors are inhibited by D-serine at 100uM. Its function is as follows. Component of N-methyl-D-aspartate (NMDA) receptors (NMDARs) that function as heterotetrameric, ligand-gated cation channels with high calcium permeability and voltage-dependent block by Mg(2+). NMDARs participate in synaptic plasticity for learning and memory formation by contributing to the long-term potentiation (LTP). Channel activation requires binding of the neurotransmitter L-glutamate to the GluN2 subunit, glycine or D-serine binding to the GluN1 subunit, plus membrane depolarization to eliminate channel inhibition by Mg(2+). NMDARs mediate simultaneously the potasium efflux and the influx of calcium and sodium. Each GluN2 or GluN3 subunit confers differential attributes to channel properties, including activation, deactivation and desensitization kinetics, pH sensitivity, Ca2(+) permeability, and binding to allosteric modulators. Forms excitatory glycinergic receptor complexes with GluN3 alone which are activated by glycine binding to the GluN1 and GluN3 subunits. The polypeptide is Glutamate receptor ionotropic, NMDA 1 (Rattus norvegicus (Rat)).